A 510-amino-acid chain; its full sequence is Histidine ammonia-lyase (510 aa).

Positions 143-145 (ASG) form a cross-link, 5-imidazolinone (Ala-Gly). At serine 144 the chain carries 2,3-didehydroalanine (Ser).

It belongs to the PAL/histidase family. Contains an active site 4-methylidene-imidazol-5-one (MIO), which is formed autocatalytically by cyclization and dehydration of residues Ala-Ser-Gly.

Its subcellular location is the cytoplasm. It catalyses the reaction L-histidine = trans-urocanate + NH4(+). It participates in amino-acid degradation; L-histidine degradation into L-glutamate; N-formimidoyl-L-glutamate from L-histidine: step 1/3. This chain is Histidine ammonia-lyase, found in Yersinia pseudotuberculosis serotype I (strain IP32953).